Here is a 315-residue protein sequence, read N- to C-terminus: C1GALT1-specific chaperone 1-like protein (315 aa).

Over Met-1–Ser-8 the chain is Cytoplasmic. Residues Phe-9 to Ile-29 form a helical; Signal-anchor for type II membrane protein membrane-spanning segment. At His-30–Asp-315 the chain is on the lumenal side. 2 N-linked (GlcNAc...) asparagine glycosylation sites follow: Asn-55 and Asn-301.

It belongs to the glycosyltransferase 31 family. Beta3-Gal-T subfamily.

The protein localises to the membrane. In Homo sapiens (Human), this protein is C1GALT1-specific chaperone 1-like protein.